The sequence spans 270 residues: Tryptophan synthase alpha chain (270 aa).

Active-site proton acceptor residues include glutamate 49 and aspartate 60.

The protein belongs to the TrpA family. In terms of assembly, tetramer of two alpha and two beta chains.

It carries out the reaction (1S,2R)-1-C-(indol-3-yl)glycerol 3-phosphate + L-serine = D-glyceraldehyde 3-phosphate + L-tryptophan + H2O. It functions in the pathway amino-acid biosynthesis; L-tryptophan biosynthesis; L-tryptophan from chorismate: step 5/5. In terms of biological role, the alpha subunit is responsible for the aldol cleavage of indoleglycerol phosphate to indole and glyceraldehyde 3-phosphate. The polypeptide is Tryptophan synthase alpha chain (Pseudomonas fluorescens (strain ATCC BAA-477 / NRRL B-23932 / Pf-5)).